Reading from the N-terminus, the 701-residue chain is Ribosomal RNA large subunit methyltransferase K/L (701 aa).

The THUMP domain occupies 44 to 155 (QAYKICLWSR…SDKLTVYLDL (112 aa)).

It belongs to the methyltransferase superfamily. RlmKL family.

The protein localises to the cytoplasm. It catalyses the reaction guanosine(2445) in 23S rRNA + S-adenosyl-L-methionine = N(2)-methylguanosine(2445) in 23S rRNA + S-adenosyl-L-homocysteine + H(+). The enzyme catalyses guanosine(2069) in 23S rRNA + S-adenosyl-L-methionine = N(2)-methylguanosine(2069) in 23S rRNA + S-adenosyl-L-homocysteine + H(+). Functionally, specifically methylates the guanine in position 2445 (m2G2445) and the guanine in position 2069 (m7G2069) of 23S rRNA. This chain is Ribosomal RNA large subunit methyltransferase K/L, found in Pseudoalteromonas atlantica (strain T6c / ATCC BAA-1087).